The following is a 426-amino-acid chain: Histidine--tRNA ligase (426 aa).

Belongs to the class-II aminoacyl-tRNA synthetase family. As to quaternary structure, homodimer.

It localises to the cytoplasm. It catalyses the reaction tRNA(His) + L-histidine + ATP = L-histidyl-tRNA(His) + AMP + diphosphate + H(+). This is Histidine--tRNA ligase from Shewanella baltica (strain OS223).